Reading from the N-terminus, the 328-residue chain is Porphobilinogen deaminase (328 aa).

C250 is modified (S-(dipyrrolylmethanemethyl)cysteine).

The protein belongs to the HMBS family. Monomer. Dipyrromethane serves as cofactor.

It catalyses the reaction 4 porphobilinogen + H2O = hydroxymethylbilane + 4 NH4(+). Its pathway is porphyrin-containing compound metabolism; protoporphyrin-IX biosynthesis; coproporphyrinogen-III from 5-aminolevulinate: step 2/4. In terms of biological role, tetrapolymerization of the monopyrrole PBG into the hydroxymethylbilane pre-uroporphyrinogen in several discrete steps. This Burkholderia ambifaria (strain ATCC BAA-244 / DSM 16087 / CCUG 44356 / LMG 19182 / AMMD) (Burkholderia cepacia (strain AMMD)) protein is Porphobilinogen deaminase.